Here is a 261-residue protein sequence, read N- to C-terminus: 5-hmdU DNA kinase (261 aa).

The protein belongs to the thymidylate kinase family. 5-hmdU DNA kinase subfamily.

It carries out the reaction 5-hydroxymethyl-dUMP in DNA + ATP = 5-phosphomethyl-dUMP in DNA + ADP + H(+). Phosphorylates 5-hydroxymethyluracil (5hmdU) into 5-phosphomethyl-2'-deoxyuridine (5- PmdU) on DNA as a step in the pathway leading to thymidine hypermodifications in the viral genome. As a final result of the pathway of hypermodification, 5-Nalpha-putrescinylthymidine (Nalpha-PutT) substitutes for about 50% of thymidines in the viral DNA. These modifications probably prevent degradation of viral genome by the host restriction-modification antiviral defense system. The sequence is that of 5-hmdU DNA kinase from Delftia phage PhiW-14 (Deftia acidovorans bacteriophage phiW-14).